The sequence spans 444 residues: Methylenetetrahydrofolate--tRNA-(uracil-5-)-methyltransferase TrmFO (444 aa).

Residue 10 to 15 (GAGLAG) coordinates FAD.

The protein belongs to the MnmG family. TrmFO subfamily. FAD is required as a cofactor.

Its subcellular location is the cytoplasm. The enzyme catalyses uridine(54) in tRNA + (6R)-5,10-methylene-5,6,7,8-tetrahydrofolate + NADH + H(+) = 5-methyluridine(54) in tRNA + (6S)-5,6,7,8-tetrahydrofolate + NAD(+). It catalyses the reaction uridine(54) in tRNA + (6R)-5,10-methylene-5,6,7,8-tetrahydrofolate + NADPH + H(+) = 5-methyluridine(54) in tRNA + (6S)-5,6,7,8-tetrahydrofolate + NADP(+). Functionally, catalyzes the folate-dependent formation of 5-methyl-uridine at position 54 (M-5-U54) in all tRNAs. The protein is Methylenetetrahydrofolate--tRNA-(uracil-5-)-methyltransferase TrmFO of Streptococcus sanguinis (strain SK36).